The chain runs to 55 residues: Mitochondrial import receptor subunit TOM7 homolog (55 aa).

Topologically, residues 1–20 (MVKLSKEAKQRLQQLFKGGQ) are cytoplasmic. Residues 21 to 40 (FAIRWGFIPLVIYLGFTRGA) form a helical membrane-spanning segment. The Mitochondrial intermembrane portion of the chain corresponds to 41-55 (DPGMPEPSVLSLLWG).

This sequence belongs to the Tom7 family. Forms part of the preprotein translocase complex of the outer mitochondrial membrane (TOM complex) which consists of at least 7 different proteins (TOMM5, TOMM6, TOMM7, TOMM20, TOMM22, TOMM40 and TOMM70).

It localises to the mitochondrion outer membrane. Required for assembly and stability of the TOM complex. Positive regulator of PRKN translocation to damaged mitochondria. Acts probably by stabilizing PINK1 on the outer membrane of depolarized mitochondria. This Mus musculus (Mouse) protein is Mitochondrial import receptor subunit TOM7 homolog (Tomm7).